We begin with the raw amino-acid sequence, 72 residues long: DNA gyrase inhibitor YacG (72 aa).

4 residues coordinate Zn(2+): C17, C20, C32, and C36. Residues 52–72 form a disordered region; it reads PGPEEDEMSYPPHSNDGNRSR.

The protein belongs to the DNA gyrase inhibitor YacG family. As to quaternary structure, interacts with GyrB. The cofactor is Zn(2+).

Functionally, inhibits all the catalytic activities of DNA gyrase by preventing its interaction with DNA. Acts by binding directly to the C-terminal domain of GyrB, which probably disrupts DNA binding by the gyrase. The sequence is that of DNA gyrase inhibitor YacG from Methylorubrum extorquens (strain CM4 / NCIMB 13688) (Methylobacterium extorquens).